Reading from the N-terminus, the 196-residue chain is ATP-dependent Clp protease proteolytic subunit (196 aa).

The Nucleophile role is filled by Ser98. His123 is an active-site residue.

It belongs to the peptidase S14 family. Fourteen ClpP subunits assemble into 2 heptameric rings which stack back to back to give a disk-like structure with a central cavity, resembling the structure of eukaryotic proteasomes.

It is found in the cytoplasm. It carries out the reaction Hydrolysis of proteins to small peptides in the presence of ATP and magnesium. alpha-casein is the usual test substrate. In the absence of ATP, only oligopeptides shorter than five residues are hydrolyzed (such as succinyl-Leu-Tyr-|-NHMec, and Leu-Tyr-Leu-|-Tyr-Trp, in which cleavage of the -Tyr-|-Leu- and -Tyr-|-Trp bonds also occurs).. Its function is as follows. Cleaves peptides in various proteins in a process that requires ATP hydrolysis. Has a chymotrypsin-like activity. Plays a major role in the degradation of misfolded proteins. This Lactiplantibacillus plantarum (strain ATCC BAA-793 / NCIMB 8826 / WCFS1) (Lactobacillus plantarum) protein is ATP-dependent Clp protease proteolytic subunit.